A 447-amino-acid chain; its full sequence is Rab GDP dissociation inhibitor alpha (447 aa).

Phosphoserine is present on Ser427.

Belongs to the Rab GDI family. Interacts with RHOH. Interacts with the non-phosphorylated forms of RAB1A, RAB3A, RAB5A, RAB5B, RAB5C, RAB8A, RAB8B, RAB10, RAB12, RAB35, and RAB43. Interacts with RAB3A.

Its subcellular location is the cytoplasm. It is found in the golgi apparatus. The protein localises to the trans-Golgi network. Its function is as follows. Regulates the GDP/GTP exchange reaction of most Rab proteins by inhibiting the dissociation of GDP from them, and the subsequent binding of GTP to them. Promotes the dissociation of GDP-bound Rab proteins from the membrane and inhibits their activation. Promotes the dissociation of RAB1A, RAB3A, RAB5A and RAB10 from membranes. In Bos taurus (Bovine), this protein is Rab GDP dissociation inhibitor alpha (GDI1).